A 147-amino-acid polypeptide reads, in one-letter code: UPF0260 protein CJA_2436 (147 aa).

This sequence belongs to the UPF0260 family.

This chain is UPF0260 protein CJA_2436, found in Cellvibrio japonicus (strain Ueda107) (Pseudomonas fluorescens subsp. cellulosa).